The primary structure comprises 358 residues: Aminomethyltransferase (358 aa).

The protein belongs to the GcvT family. The glycine cleavage system is composed of four proteins: P, T, L and H.

The catalysed reaction is N(6)-[(R)-S(8)-aminomethyldihydrolipoyl]-L-lysyl-[protein] + (6S)-5,6,7,8-tetrahydrofolate = N(6)-[(R)-dihydrolipoyl]-L-lysyl-[protein] + (6R)-5,10-methylene-5,6,7,8-tetrahydrofolate + NH4(+). Functionally, the glycine cleavage system catalyzes the degradation of glycine. The polypeptide is Aminomethyltransferase (Francisella tularensis subsp. tularensis (strain FSC 198)).